A 103-amino-acid polypeptide reads, in one-letter code: Large ribosomal subunit protein bL21 (103 aa).

The protein belongs to the bacterial ribosomal protein bL21 family. Part of the 50S ribosomal subunit. Contacts protein L20.

Functionally, this protein binds to 23S rRNA in the presence of protein L20. The protein is Large ribosomal subunit protein bL21 of Clostridium acetobutylicum (strain ATCC 824 / DSM 792 / JCM 1419 / IAM 19013 / LMG 5710 / NBRC 13948 / NRRL B-527 / VKM B-1787 / 2291 / W).